A 271-amino-acid polypeptide reads, in one-letter code: HTH-type transcriptional repressor AllR (271 aa).

Residues 21 to 83 (AQALERGIAI…SQLGWWHIGL (63 aa)) form the HTH iclR-type domain. The segment at residues 43–62 (VSDISLNLDLPLSTTFRLLK) is a DNA-binding region (H-T-H motif). The IclR-ED domain occupies 98-267 (VLSVAGPFMR…ARDISTALGL (170 aa)). Residues 154-156 (SGA), Asp207, Cys217, and 234-236 (SIS) contribute to the glyoxylate site.

In terms of biological role, negative regulator of allantoin and glyoxylate utilization operons. Binds to the gcl promoter and to the allS-allA intergenic region. The protein is HTH-type transcriptional repressor AllR (allR) of Escherichia coli O6:H1 (strain CFT073 / ATCC 700928 / UPEC).